We begin with the raw amino-acid sequence, 134 residues long: ATP synthase epsilon chain (134 aa).

The protein belongs to the ATPase epsilon chain family. F-type ATPases have 2 components, CF(1) - the catalytic core - and CF(0) - the membrane proton channel. CF(1) has five subunits: alpha(3), beta(3), gamma(1), delta(1), epsilon(1). CF(0) has three main subunits: a, b and c.

The protein resides in the cell membrane. In terms of biological role, produces ATP from ADP in the presence of a proton gradient across the membrane. This Alkaliphilus metalliredigens (strain QYMF) protein is ATP synthase epsilon chain.